Consider the following 434-residue polypeptide: Alpha-enolase (434 aa).

Ser-2 carries the N-acetylserine modification. Position 5 is an N6-acetyllysine (Lys-5). Ser-40 is a binding site for Mg(2+). Tyr-44 carries the post-translational modification Phosphotyrosine. Residue Lys-60 is modified to N6-acetyllysine; alternate. Lys-60 carries the N6-succinyllysine; alternate modification. 2 positions are modified to N6-acetyllysine: Lys-64 and Lys-71. N6-acetyllysine; alternate is present on Lys-89. Lys-89 is subject to N6-succinyllysine; alternate. Residues Lys-92 and Lys-126 each carry the N6-acetyllysine modification. Residues His-158 and Glu-167 each coordinate substrate. N6-acetyllysine occurs at positions 193 and 199. Lys-202 is subject to N6-acetyllysine; alternate. A Glycyl lysine isopeptide (Lys-Gly) (interchain with G-Cter in SUMO2); alternate cross-link involves residue Lys-202. Glu-210 (proton donor) is an active-site residue. N6-acetyllysine; alternate occurs at positions 228 and 233. Position 228 is an N6-succinyllysine; alternate (Lys-228). An N6-(2-hydroxyisobutyryl)lysine; alternate modification is found at Lys-228. Lys-233 bears the N6-malonyllysine; alternate mark. Residue Asp-245 coordinates Mg(2+). Ser-254 is subject to Phosphoserine. N6-acetyllysine is present on Lys-256. A Phosphoserine modification is found at Ser-263. Lys-281 bears the N6-acetyllysine; alternate mark. Position 281 is an N6-(2-hydroxyisobutyryl)lysine; alternate (Lys-281). At Tyr-287 the chain carries Phosphotyrosine. Ser-291 carries the phosphoserine modification. Glu-293 and Asp-318 together coordinate Mg(2+). Positions 293 and 318 each coordinate substrate. 2 positions are modified to N6-acetyllysine: Lys-335 and Lys-343. The Proton acceptor role is filled by Lys-343. Substrate-binding positions include 370-373 and Lys-394; that span reads SHRS. Residues 405 to 434 are required for interaction with PLG; it reads AKYNQILRIEEELGSKAKFAGRSFRNPLAK. Lys-406 is subject to N6-acetyllysine. Lys-420 carries the N6-acetyllysine; alternate modification. Lys-420 carries the N6-succinyllysine; alternate modification. The residue at position 420 (Lys-420) is an N6-malonyllysine; alternate.

The protein belongs to the enolase family. In terms of assembly, mammalian enolase is composed of 3 isozyme subunits, alpha, beta and gamma, which can form homodimers or heterodimers which are cell-type and development-specific. ENO1 interacts with PLG in the neuronal plasma membrane and promotes its activation. The C-terminal lysine is required for this binding. Interacts with ENO4 and PGAM2. Interacts with CMTM6. It depends on Mg(2+) as a cofactor. In terms of processing, ISGylated. Post-translationally, lysine 2-hydroxyisobutyrylation (Khib) by p300/EP300 activates the phosphopyruvate hydratase activity. The alpha/alpha homodimer is expressed in embryo and in most adult tissues. The alpha/beta heterodimer and the beta/beta homodimer are found in striated muscle, and the alpha/gamma heterodimer and the gamma/gamma homodimer in neurons.

The protein resides in the cytoplasm. The protein localises to the cell membrane. It carries out the reaction (2R)-2-phosphoglycerate = phosphoenolpyruvate + H2O. It functions in the pathway carbohydrate degradation; glycolysis; pyruvate from D-glyceraldehyde 3-phosphate: step 4/5. In terms of biological role, glycolytic enzyme the catalyzes the conversion of 2-phosphoglycerate to phosphoenolpyruvate. In addition to glycolysis, involved in various processes such as growth control, hypoxia tolerance and allergic responses. May also function in the intravascular and pericellular fibrinolytic system due to its ability to serve as a receptor and activator of plasminogen on the cell surface of several cell-types such as leukocytes and neurons. Stimulates immunoglobulin production. This chain is Alpha-enolase (ENO1), found in Bos taurus (Bovine).